We begin with the raw amino-acid sequence, 597 residues long: Elongation factor 4 (597 aa).

The tr-type G domain occupies 2-184 (DHIRNFSIIA…ALIAKVPPPK (183 aa)). Residues 14–19 (DHGKST) and 131–134 (NKID) each bind GTP.

The protein belongs to the TRAFAC class translation factor GTPase superfamily. Classic translation factor GTPase family. LepA subfamily.

It localises to the cell inner membrane. The enzyme catalyses GTP + H2O = GDP + phosphate + H(+). Its function is as follows. Required for accurate and efficient protein synthesis under certain stress conditions. May act as a fidelity factor of the translation reaction, by catalyzing a one-codon backward translocation of tRNAs on improperly translocated ribosomes. Back-translocation proceeds from a post-translocation (POST) complex to a pre-translocation (PRE) complex, thus giving elongation factor G a second chance to translocate the tRNAs correctly. Binds to ribosomes in a GTP-dependent manner. This chain is Elongation factor 4, found in Cupriavidus taiwanensis (strain DSM 17343 / BCRC 17206 / CCUG 44338 / CIP 107171 / LMG 19424 / R1) (Ralstonia taiwanensis (strain LMG 19424)).